The sequence spans 182 residues: Capsid protein (182 aa).

The tract at residues 136–182 (NAPILSTLPETTVVRRRRPSGRRTPSPRRRRSQSPRRRRSQSPASSC) is disordered. Positions 149 to 175 (VRRRRPSGRRTPSPRRRRSQSPRRRRS) are enriched in basic residues. A Bipartite nuclear localization signal motif is present at residues 157–174 (RRTPSPRRRRSQSPRRRR). Ser-161 and Ser-169 each carry phosphoserine; by host. 2 tandem repeats follow at residues 161–168 (SPRRRRSQ) and 169–176 (SPRRRRSQ). Positions 161-176 (SPRRRRSQSPRRRRSQ) are 2 X 8 AA repeats of S-P-R-R-R-[PR]-S-Q. An RNA binding region spans residues 176–182 (QSPASSC).

This sequence belongs to the orthohepadnavirus core antigen family. Homodimerizes, then multimerizes. Interacts with cytosol exposed regions of viral L glycoprotein present in the reticulum-to-Golgi compartment. Interacts with human FLNB. Phosphorylated form interacts with host importin alpha; this interaction depends on the exposure of the NLS, which itself depends upon genome maturation and/or phosphorylation of the capsid protein. Interacts with host NUP153. In terms of processing, phosphorylated by host SRPK1, SRPK2, and maybe protein kinase C or GAPDH. Phosphorylation is critical for pregenomic RNA packaging. Protein kinase C phosphorylation is stimulated by HBx protein and may play a role in transport of the viral genome to the nucleus at the late step during the viral replication cycle.

It is found in the virion. Its subcellular location is the host cytoplasm. Self assembles to form an icosahedral capsid. Most capsids appear to be large particles with an icosahedral symmetry of T=4 and consist of 240 copies of capsid protein, though a fraction forms smaller T=3 particles consisting of 180 capsid proteins. Entering capsids are transported along microtubules to the nucleus. Phosphorylation of the capsid is thought to induce exposure of nuclear localization signal in the C-terminal portion of the capsid protein that allows binding to the nuclear pore complex via the importin (karyopherin-) alpha and beta. Capsids are imported in intact form through the nuclear pore into the nuclear basket, where it probably binds NUP153. Only capsids that contain the mature viral genome can release the viral DNA and capsid protein into the nucleoplasm. Immature capsids get stuck in the basket. Capsids encapsulate the pre-genomic RNA and the P protein. Pre-genomic RNA is reverse-transcribed into DNA while the capsid is still in the cytoplasm. The capsid can then either be directed to the nucleus, providing more genomes for transcription, or bud through the endoplasmic reticulum to provide new virions. In Woolly monkey hepatitis B virus (isolate Louisville) (WMHBV), this protein is Capsid protein.